The primary structure comprises 115 residues: MTTSFYFLLMALGLLLYVCQSSFGNQHTRNSDTPKYRCGSEIPNSYIDLCFRKRNDAGKKRGRASPLWQRGGSLSMLKARAKRNEAFHLQRAHRGVVEHCCHRPCSNAEFKKFCG.

The signal sequence occupies residues 1 to 24 (MTTSFYFLLMALGLLLYVCQSSFG). Positions 25-29 (NQHTR) are excised as a propeptide. Residue Pro34 is modified to 4-hydroxyproline; partial. 3 cysteine pairs are disulfide-bonded: Cys38-Cys101, Cys50-Cys114, and Cys100-Cys105. Position 41 is a 4-carboxyglutamate (Glu41). A propeptide spans 53 to 94 (KRNDAGKKRGRASPLWQRGGSLSMLKARAKRNEAFHLQRAHR) (c peptide). The residue at position 98 (Glu98) is a 4-carboxyglutamate. Pro104 is modified (4-hydroxyproline; partial). Position 109 is a 4-carboxyglutamate; partial (Glu109). Cys114 carries the post-translational modification Cysteine amide.

This sequence belongs to the insulin family. As to quaternary structure, heterodimer of A and B chains; disulfide-linked. In terms of tissue distribution, expressed by the venom gland.

Its subcellular location is the secreted. In terms of biological role, this venom insulin, from a fish-hunting cone snail, facilitates prey capture by rapidly inducing hypoglycemic shock. It is one of the smallest known insulin found in nature and lacks the C-terminal segment of the B chain that, in human insulin, mediates engagement of the insulin receptor (INSR) and assembly of the hormone's hexameric storage form. Despite lacking this segment, it both binds and activates human insulin receptor (long isoform (HIR-B)) with a high potency (EC(50)=12.0 nM). In vivo, intraperitoneal injection of this peptide into zebrafish lowers blood glucose with a lower potency than human insulin. In addition, when applied to water, this peptide reduces overall locomotor activity of zebrafish larvae, observed as a significant decrease in the percentage of time spent swimming and movement frequency. When tested on a mouse model of diabetes, this insulin also lowers blood glucose with a 10-fold lower potency than human insulin. The chain is Con-Ins T1A from Conus tulipa (Fish-hunting cone snail).